Reading from the N-terminus, the 504-residue chain is ATP synthase subunit alpha, chloroplastic (504 aa).

Residue 170-177 (GDRQTGKT) coordinates ATP.

It belongs to the ATPase alpha/beta chains family. F-type ATPases have 2 components, CF(1) - the catalytic core - and CF(0) - the membrane proton channel. CF(1) has five subunits: alpha(3), beta(3), gamma(1), delta(1), epsilon(1). CF(0) has four main subunits: a, b, b' and c.

It is found in the plastid. Its subcellular location is the chloroplast thylakoid membrane. It carries out the reaction ATP + H2O + 4 H(+)(in) = ADP + phosphate + 5 H(+)(out). Its function is as follows. Produces ATP from ADP in the presence of a proton gradient across the membrane. The alpha chain is a regulatory subunit. The chain is ATP synthase subunit alpha, chloroplastic from Pyropia yezoensis (Susabi-nori).